Reading from the N-terminus, the 586-residue chain is Maltogenic alpha-amylase (586 aa).

5 residues coordinate Ca(2+): Asn-147, Asn-152, Asp-153, Gly-172, and Asp-174. His-247 and Arg-326 together coordinate substrate. Catalysis depends on Asp-328, which acts as the Nucleophile. The active-site Proton donor is the Glu-357. Substrate contacts are provided by residues His-423–Asp-424, Asp-468, and Arg-472.

It belongs to the glycosyl hydrolase 13 family. The cofactor is Ca(2+).

It carries out the reaction hydrolysis of (1-&gt;4)-alpha-D-glucosidic linkages in polysaccharides so as to remove successive alpha-maltose residues from the non-reducing ends of the chains.. Its function is as follows. Converts starch into maltose. In Bacillus acidopullulyticus, this protein is Maltogenic alpha-amylase.